We begin with the raw amino-acid sequence, 638 residues long: MPEITLPDGSKKVFEKPVTIQEIAQSIGSGLAKATIAGKVNDVLFDATLPIDNDSKVVIITSRDKDGIEIIRHSFAHLIGHAVKQLYPNIKMAIGPVIDNGFYYDIFSEYRFTPEDLIKIENRINNLIKKNYDVEILQVTKKEAIKTFQERDETFKLRIIEEIPDEGLINLYKHEEYIDMCRGPHVPNTCHLRHFKLLKLSGSYWRGNSENESLQRIYGTAWAKEKELNDYLKRIEEAEKRDHRKLGKKHSLFHIQEESPGMIFWHPNGWTIYQVLEKYVREILNKNDYLEIKTPQAVDKSLWEKSGHWDKFREDMFTTASENRTYAIKPMNCPCHIQVFNQGLKSYKDLPIRLAEFGSCHRNEPSGALHGLMRVRNFTQDDAHIFCTEEQIQAEVSTFIDLVFEVYKTFGFDEIIIKLSTRPEKRVGSENIWDKSEEALMKALDNKSLKWVLQPGEGAFYGPKIEFSLKDCLDRVWQCGTIQVDFSMPIRLDATYIDLNNEKRNPVMLHRAILGSFERFIGILIEQYEAKFPIWLAPYQIILLSITDRNIEKCLKFNQLINSKGYRSKVDIRNEKIGYKIREATIGRIPLIAVIGDKEEQFDSVALRALDGKNLGIFKLDDLYKLMNNLIEKKGRTE.

Residues 1–61 (MPEITLPDGS…DNDSKVVIIT (61 aa)) form the TGS domain. Residues 242-533 (DHRKLGKKHS…LIEQYEAKFP (292 aa)) form a catalytic region. Zn(2+)-binding residues include Cys333, His384, and His510.

It belongs to the class-II aminoacyl-tRNA synthetase family. In terms of assembly, homodimer. Zn(2+) serves as cofactor.

The protein localises to the cytoplasm. The enzyme catalyses tRNA(Thr) + L-threonine + ATP = L-threonyl-tRNA(Thr) + AMP + diphosphate + H(+). In terms of biological role, catalyzes the attachment of threonine to tRNA(Thr) in a two-step reaction: L-threonine is first activated by ATP to form Thr-AMP and then transferred to the acceptor end of tRNA(Thr). Also edits incorrectly charged L-seryl-tRNA(Thr). This Prochlorococcus marinus subsp. pastoris (strain CCMP1986 / NIES-2087 / MED4) protein is Threonine--tRNA ligase.